Here is a 1728-residue protein sequence, read N- to C-terminus: Mitochondrial 3' processome subunit 1 (1728 aa).

The transit peptide at 1-117 (MRRLILSQTL…AGKMTGSSRF (117 aa)) directs the protein to the mitochondrion. Disordered regions lie at residues 45-71 (HRKREGRMYGKPLRPVSDGENGASGDG), 88-156 (ESPV…IGQQ), and 829-863 (GCNRDGGPSRPNTATDSANKKVVSGKQTDNLPKGT).

Component of the mitochondrial 3' processome (MPsome) complex composed at least of terminal uridylyltransferase KRET1/TUT1, 3'-5' exonuclease DSS1, MPSS1, MPSS2 and MPSS3. Within the complex, interacts with KRET1.

It localises to the mitochondrion. Functionally, as part of the mitochondrial 3' processome (MPsome), involved in the maturation of guided RNA (gRNA) precursors. The protein is Mitochondrial 3' processome subunit 1 of Trypanosoma brucei brucei.